Reading from the N-terminus, the 438-residue chain is UPF0229 protein Smed_1028 (438 aa).

The tract at residues 55 to 107 (PARGVNEPAFQPDSNSGERRHVLPGNREFAAGDRIPKRGGGGGAGNAGAGTGQ) is disordered. Gly residues predominate over residues 92–105 (RGGGGGAGNAGAGT).

The protein belongs to the UPF0229 family.

The protein is UPF0229 protein Smed_1028 of Sinorhizobium medicae (strain WSM419) (Ensifer medicae).